A 239-amino-acid chain; its full sequence is Demethylmenaquinone methyltransferase (239 aa).

S-adenosyl-L-methionine-binding positions include T60, D81, and 106 to 107 (DA).

This sequence belongs to the class I-like SAM-binding methyltransferase superfamily. MenG/UbiE family.

It catalyses the reaction a 2-demethylmenaquinol + S-adenosyl-L-methionine = a menaquinol + S-adenosyl-L-homocysteine + H(+). Its pathway is quinol/quinone metabolism; menaquinone biosynthesis; menaquinol from 1,4-dihydroxy-2-naphthoate: step 2/2. Methyltransferase required for the conversion of demethylmenaquinol (DMKH2) to menaquinol (MKH2). The chain is Demethylmenaquinone methyltransferase from Staphylococcus haemolyticus (strain JCSC1435).